A 524-amino-acid chain; its full sequence is Phosphoenolpyruvate carboxykinase (ATP) (524 aa).

3 residues coordinate substrate: Arg52, Tyr188, and Lys194. Residues Lys194, His213, and 229–237 (GLSGTGKTT) each bind ATP. 2 residues coordinate Mn(2+): Lys194 and His213. Asp250 contributes to the Mn(2+) binding site. Glu278, Arg314, and Thr439 together coordinate ATP. Arg314 is a binding site for substrate.

Belongs to the phosphoenolpyruvate carboxykinase (ATP) family. Mn(2+) serves as cofactor.

The protein localises to the cytoplasm. The enzyme catalyses oxaloacetate + ATP = phosphoenolpyruvate + ADP + CO2. It functions in the pathway carbohydrate biosynthesis; gluconeogenesis. In terms of biological role, involved in the gluconeogenesis. Catalyzes the conversion of oxaloacetate (OAA) to phosphoenolpyruvate (PEP) through direct phosphoryl transfer between the nucleoside triphosphate and OAA. This is Phosphoenolpyruvate carboxykinase (ATP) from Campylobacter jejuni subsp. jejuni serotype O:23/36 (strain 81-176).